The primary structure comprises 344 residues: Glutamine synthetase (344 aa).

One can recognise a GS beta-grasp domain in the interval 4 to 86; the sequence is YKLEYIWLDG…VMCEVMMPDG (83 aa). The 256-residue stretch at 89–344 folds into the GS catalytic domain; the sequence is PHASNKRATI…SVPTEKKAVA (256 aa). Mg(2+) is bound by residues E109 and E111. Residue E167 participates in ATP binding. Mg(2+) is bound by residues E172 and E179. E278 provides a ligand contact to L-glutamate.

This sequence belongs to the glutamine synthetase family. As to quaternary structure, homooctamer and homotetramer. It depends on Mg(2+) as a cofactor.

The protein localises to the cytoplasm. It catalyses the reaction L-glutamate + NH4(+) + ATP = L-glutamine + ADP + phosphate + H(+). Catalyzes the ATP-dependent biosynthesis of glutamine from glutamate and ammonia. This chain is Glutamine synthetase, found in Bradyrhizobium diazoefficiens (strain JCM 10833 / BCRC 13528 / IAM 13628 / NBRC 14792 / USDA 110).